Consider the following 947-residue polypeptide: Netrin receptor unc-5 (947 aa).

The 99-residue stretch at 43 to 141 (VIRNKPLRLQ…VHLAYMRKHF (99 aa)) folds into the Ig-like domain. Intrachain disulfides connect Cys-53-Cys-112, Cys-160-Cys-209, Cys-243-Cys-295, Cys-247-Cys-299, and Cys-273-Cys-285. Residues 139 to 226 (KHFLKSPVAQ…SRKTDPVEVQ (88 aa)) form the Ig-like C2-type domain. Asn-206 is a glycosylation site (N-linked (GlcNAc...) asparagine). TSP type-1 domains lie at 230-300 (DGGW…VPCK) and 302-354 (DGGW…QLCT). C-linked (Man) tryptophan glycans are attached at residues Trp-305 and Trp-308. Residues 369–389 (GSVASIFIVASFILAILAMFC) traverse the membrane as a helical segment. Topologically, residues 390 to 947 (CKRGNSKKSK…LSAFPQIVSP (558 aa)) are cytoplasmic. The residue at position 510 (Tyr-510) is a Phosphotyrosine. The ZU5 domain occupies 530-658 (NIVAAQIDSN…LNTNMFVQFE (129 aa)). The 82-residue stretch at 857–938 (ELARLLDMPN…DAVMVLERFL (82 aa)) folds into the Death domain.

This sequence belongs to the unc-5 family. Interacts (via cytoplasmic domain) with src-1 (via SH2 domain and SH3 domain). Interacts with madd-4. Interacts with unc-129; the interaction is direct. Phosphorylated on different cytoplasmic tyrosine residues. May be phosphorylated on tyrosine residues by src-1. Tyrosine phosphorylation is unc-6-dependent. Post-translationally, glycosylated via C-mannosylation by dpy-19 at Trp-305 and Trp-308. Expressed in cell bodies and axons of the VNC motor neurons that extend axons to the dorsal midline and within the ventral nerve cord. Expressed in gonadal distal tip cells (DTC).

The protein resides in the cell membrane. Its subcellular location is the membrane raft. It localises to the cell projection. The protein localises to the neuron projection. In terms of biological role, receptor for netrin (unc-6) required for axon guidance. Mediates axon repulsion of neuronal growth cones in the developing nervous system upon ligand binding. Axon migration is mediated by the secreted unc-6, which promotes attraction of neurons and axons through binding to the unc-40 receptor, while repulsion requires both unc-5 and unc-40 receptors. Involved in the ventral-dorsal and anterior-posterior migration of distal tip cells along the body, which may be mediated by Wnt receptor mom-5, ced-10/Rac, ced-12/ELMO and mig-2/RhoG. The sequence is that of Netrin receptor unc-5 from Caenorhabditis elegans.